The chain runs to 546 residues: Methionine--tRNA ligase (546 aa).

The 'HIGH' region signature appears at 15–25 (PYANGPIHLGH). Residues C146, C149, C159, and C162 each contribute to the Zn(2+) site. A 'KMSKS' region motif is present at residues 332–336 (KMSKS). Residue K335 participates in ATP binding.

Belongs to the class-I aminoacyl-tRNA synthetase family. MetG type 1 subfamily. As to quaternary structure, monomer. It depends on Zn(2+) as a cofactor.

It localises to the cytoplasm. The catalysed reaction is tRNA(Met) + L-methionine + ATP = L-methionyl-tRNA(Met) + AMP + diphosphate. In terms of biological role, is required not only for elongation of protein synthesis but also for the initiation of all mRNA translation through initiator tRNA(fMet) aminoacylation. The chain is Methionine--tRNA ligase from Coxiella burnetii (strain RSA 331 / Henzerling II).